We begin with the raw amino-acid sequence, 2276 residues long: Non-reducing polyketide synthase VdtA (2276 aa).

The tract at residues 8–243 (YLFGDQTYDY…KDIPIHAPYH (236 aa)) is N-terminal acylcarrier protein transacylase (SAT) domain. The region spanning 372–804 (RAKIAIVGMS…GGNSSVLVED (433 aa)) is the Ketosynthase family 3 (KS3) domain. Residues cysteine 544, histidine 679, and histidine 723 each act as for beta-ketoacyl synthase activity in the active site. Residues 905–1206 (FTFTGQGAQY…KALPTLQRNR (302 aa)) are malonyl-CoA:ACP transacylase (MAT) domain. Residue serine 996 is the For acyl/malonyl transferase activity of the active site. The segment at 1300–1616 (TTTLHRIVDE…PRRVLRYILQ (317 aa)) is product template (PT) domain. The tract at residues 1304-1438 (HRIVDEKSTE…CRIKFSDRST (135 aa)) is N-terminal hotdog fold. The region spanning 1304 to 1612 (HRIVDEKSTE…IQGVPRRVLR (309 aa)) is the PKS/mFAS DH domain. The active-site Proton acceptor; for dehydratase activity is histidine 1336. Residues 1465 to 1612 (TYRFNGPMAY…IQGVPRRVLR (148 aa)) are C-terminal hotdog fold. Aspartate 1525 serves as the catalytic Proton donor; for dehydratase activity. The region spanning 1655–1729 (SGTLTEALRI…DLKRFFDKIN (75 aa)) is the Carrier 1 domain. Serine 1689 carries the O-(pantetheine 4'-phosphoryl)serine modification. The tract at residues 1735–1762 (APAPVSDAPKQLQPSSSPVASATPSAPI) is disordered. A compositionally biased stretch (low complexity) spans 1748-1761 (PSSSPVASATPSAP). The Carrier 2 domain occupies 1765–1839 (RSKFESVLNI…DLKAHFMSKN (75 aa)). Serine 1799 is subject to O-(pantetheine 4'-phosphoryl)serine. The segment covering 1840 to 1854 (SDNGSSAVLTPQPSR) has biased composition (polar residues). Residues 1840-1882 (SDNGSSAVLTPQPSRDSALPERTRPRVADTSDEEDAPVSANEF) are disordered. The segment covering 1857 to 1868 (ALPERTRPRVAD) has biased composition (basic and acidic residues). Residues 1886-1964 (ARSTSKYMAV…GLRSFFGFES (79 aa)) form the Carrier 3 domain. Position 1923 is an O-(pantetheine 4'-phosphoryl)serine (serine 1923). Residues 1967-1993 (TATNPTASQSSSSISSGTSVFDTSPSP) are disordered. The segment covering 1969-1990 (TNPTASQSSSSISSGTSVFDTS) has biased composition (low complexity). The thioesterase (TE) domain stretch occupies residues 2020-2271 (PLPPATSVTL…GADHFSLLVS (252 aa)).

It is found in the cytoplasmic vesicle. It catalyses the reaction 7 malonyl-CoA + acetyl-CoA + 7 H(+) = 7,9,10-trihydroxy-3-(2-oxopropyl)-1H-benzo[g]isochromen-1-one + 7 CO2 + 8 CoA + 2 H2O. The protein operates within secondary metabolite biosynthesis. Non-reducing polyketide synthase; part of the gene cluster that mediates the biosynthesis of viriditoxin, one of the 'classical' secondary metabolites produced by fungi and that has antibacterial activity. The first step is performed by the polyketide synthase VdtA which condenses one acetyl-CoA and 6 malonyl-CoA units to form the heptaketide monomer backbone of viriditoxin. The product of VdtA is then O-methylated on C7 by the O-methyltransferase VdtC. The O-methyl group is important for the stereoselective coupling of the monomers at the final step of viriditoxin biosynthesis. The short-chain dehydrogenase/reductase VdtF then acts as a stereospecific reductase converting the pyrone to dihydropyrone via the reduction of the C3-C4 double bond. The FAD-binding monooxygenase VdtE then converts the ketone group into a methyl-ester group to yield semi-viriditoxin. Finally, the laccase VdtB is involved in dimerization of 2 semi-viriditoxin molecules to yield the final viriditoxin. VdtB is responsible for the regioselective 6,6'-coupling of semi-viriditoxin, which yields (M)-viriditoxin and (P)-viriditoxin at a ratio of 1:2. The non-catalytic carboxylesterase-like protein VdtD affects the stereochemistical outcome of the coupling. The highly reducing polyketide synthase VdtX is not involved in viriditoxin synthesis, but might possibly play a role in the production of additional metabolites not identified yet. The sequence is that of Non-reducing polyketide synthase VdtA from Byssochlamys spectabilis (Paecilomyces variotii).